The chain runs to 622 residues: Serine/threonine-protein kinase MAK (622 aa).

Residues 4 to 284 (YTTMKQLGDG…ASQALKHPYF (281 aa)) form the Protein kinase domain. Residues 10–18 (LGDGTYGSV) and Lys33 contribute to the ATP site. The active-site Proton acceptor is the Asp125. The residue at position 157 (Thr157) is a Phosphothreonine; by autocatalysis. The residue at position 159 (Tyr159) is a Phosphotyrosine; by autocatalysis. The disordered stretch occupies residues 301 to 371 (QTLHKQLQPL…QGHQKPPQTM (71 aa)). Positions 336–355 (QPKQGHQPLQTIQPPQNTVT) are enriched in polar residues.

It belongs to the protein kinase superfamily. CMGC Ser/Thr protein kinase family. CDC2/CDKX subfamily. As to quaternary structure, interacts with AR and CDK20. Found in a complex containing MAK, AR and NCOA3. Interacts with FZR1 (via WD repeats). Interacts with RP1. It depends on Mg(2+) as a cofactor. In terms of processing, autophosphorylated. Phosphorylated on serine and threonine residues. In terms of tissue distribution, in pre- and postmeiotic male germ cells in testis. In photoreceptor cells of the retina and in the olfactory receptors, and in certain epithelia of the respiratory tract and choroid plexus (brain).

The protein resides in the nucleus. It localises to the cytoplasm. It is found in the cytoskeleton. The protein localises to the microtubule organizing center. Its subcellular location is the centrosome. The protein resides in the spindle. It localises to the midbody. It is found in the cell projection. The protein localises to the cilium. Its subcellular location is the photoreceptor outer segment. The protein resides in the photoreceptor inner segment. It carries out the reaction L-seryl-[protein] + ATP = O-phospho-L-seryl-[protein] + ADP + H(+). The catalysed reaction is L-threonyl-[protein] + ATP = O-phospho-L-threonyl-[protein] + ADP + H(+). Functionally, essential for the regulation of ciliary length and required for the long-term survival of photoreceptors. Could have an important function in sensory cells and in spermatogenesis. May participate in signaling pathways used in visual and olfactory sensory transduction. Phosphorylates FZR1 in a cell cycle-dependent manner. Plays a role in the transcriptional coactivation of AR. The protein is Serine/threonine-protein kinase MAK (Mak) of Mus musculus (Mouse).